Consider the following 336-residue polypeptide: Transmembrane protease serine 12 (336 aa).

An N-terminal signal peptide occupies residues 1–18; the sequence is MASWALSAALLCLGGAFA. Topologically, residues 19–312 are extracellular; it reads YSELHSLSLR…HYLSQGNINR (294 aa). Residues 66-306 form the Peptidase S1 domain; it reads IIGGSQADTG…FQEWMTHYLS (241 aa). An intrachain disulfide couples cysteine 95 to cysteine 111. Active-site charge relay system residues include histidine 110 and aspartate 159. Disulfide bonds link cysteine 194-cysteine 262, cysteine 225-cysteine 241, and cysteine 252-cysteine 282. 3 N-linked (GlcNAc...) asparagine glycosylation sites follow: asparagine 207, asparagine 237, and asparagine 246. Catalysis depends on serine 256, which acts as the Charge relay system. Residues 313-333 traverse the membrane as a helical segment; it reads LFNMDIVLGQVLTALGSVILL. Over 334-336 the chain is Cytoplasmic; the sequence is GVT.

Belongs to the peptidase S1 family. As to expression, exclusively expressed in the testis, from spermatocytes to elongated spermatids (at protein level).

It localises to the cell membrane. It is found in the cytoplasmic vesicle. The protein resides in the secretory vesicle. Its subcellular location is the acrosome. Its function is as follows. Required for male fertility. Plays a critical role in sperm capacitation and acrosome reactions during fertilization, and also plays a role in the regulation of proteins involved in spermatogenesis. Regulates protein pathways that promote chromosomal synapsis formation, double-strand break repair, formation of the inner mitochondrial membrane cristae and apoptosis in developing sperm. Required for normal sperm motility and binding to the zona pellucida, potentially via a role in ADAM3 protein maturation. The protein is Transmembrane protease serine 12 of Mus musculus (Mouse).